The sequence spans 455 residues: Kynurenine 3-monooxygenase (455 aa).

This sequence belongs to the aromatic-ring hydroxylase family. KMO subfamily. FAD serves as cofactor.

The enzyme catalyses L-kynurenine + NADPH + O2 + H(+) = 3-hydroxy-L-kynurenine + NADP(+) + H2O. The protein operates within cofactor biosynthesis; NAD(+) biosynthesis; quinolinate from L-kynurenine: step 1/3. Functionally, catalyzes the hydroxylation of L-kynurenine (L-Kyn) to form 3-hydroxy-L-kynurenine (L-3OHKyn). Required for synthesis of quinolinic acid. This is Kynurenine 3-monooxygenase from Xanthomonas oryzae pv. oryzae (strain MAFF 311018).